A 160-amino-acid chain; its full sequence is Transcription elongation factor GreA (160 aa).

Residues 2–84 (KNTVNDKILL…SKAKIIKADL (83 aa)) adopt a coiled-coil conformation.

This sequence belongs to the GreA/GreB family.

Functionally, necessary for efficient RNA polymerase transcription elongation past template-encoded arresting sites. The arresting sites in DNA have the property of trapping a certain fraction of elongating RNA polymerases that pass through, resulting in locked ternary complexes. Cleavage of the nascent transcript by cleavage factors such as GreA or GreB allows the resumption of elongation from the new 3'terminus. GreA releases sequences of 2 to 3 nucleotides. This Mesomycoplasma hyopneumoniae (strain 232) (Mycoplasma hyopneumoniae) protein is Transcription elongation factor GreA.